The primary structure comprises 65 residues: Large ribosomal subunit protein uL29 (65 aa).

It belongs to the universal ribosomal protein uL29 family.

The protein is Large ribosomal subunit protein uL29 of Xylella fastidiosa (strain Temecula1 / ATCC 700964).